A 189-amino-acid chain; its full sequence is Interleukin-23 subunit alpha (189 aa).

An N-terminal signal peptide occupies residues Met1–Thr19.

The protein belongs to the IL-6 superfamily. Heterodimer with IL12B; disulfide-linked. The heterodimer is known as interleukin IL-23. Interacts with IL23R; this interaction enables recruitment of IL12RB1.

It is found in the secreted. In terms of biological role, associates with IL12B to form the pro-inflammatory cytokine IL-23 that plays different roles in innate and adaptive immunity. Released by antigen-presenting cells such as dendritic cells or macrophages, binds to a heterodimeric receptor complex composed of IL12RB1 and IL23R to activate JAK2 and TYK2 which then phosphorylate the receptor to form a docking site leading to the phosphorylation of STAT3 and STAT4. This process leads to activation of several pathways including p38 MAPK or NF-kappa-B and promotes the production of pro-inflammatory cytokines such as interleukin-17A/IL17A. In turn, participates in the early and effective intracellular bacterial clearance. Promotes the expansion and survival of T-helper 17 cells, a CD4-positive helper T-cell subset that produces IL-17, as well as other IL-17-producing cells. The polypeptide is Interleukin-23 subunit alpha (IL23A) (Cavia porcellus (Guinea pig)).